The sequence spans 951 residues: Serine/threonine-protein kinase 10 (951 aa).

The Protein kinase domain occupies 36 to 294 (WEIIGELGDG…AAQLLEHPFV (259 aa)). ATP-binding positions include 42 to 50 (LGDGAFGKV) and K65. D157 functions as the Proton acceptor in the catalytic mechanism. Over residues 319–330 (EENGEVEEEEAS) the composition is skewed to acidic residues. The segment at 319–479 (EENGEVEEEE…DSGSNSASES (161 aa)) is disordered. The segment covering 331–343 (DTPSSNKSVSQSA) has biased composition (polar residues). Basic and acidic residues predominate over residues 345–356 (GEKDKHTGKEHV). The segment covering 364–373 (PQNTDSQADI) has biased composition (polar residues). 2 stretches are compositionally biased toward basic and acidic residues: residues 374–394 (HSQK…HDAV) and 410–427 (HEPK…EEHG). Over residues 429–443 (AVSSNQRPKSSQSDR) the composition is skewed to polar residues. Phosphoserine; by PLK1 occurs at positions 483, 487, and 491. A coiled-coil region spans residues 583–723 (EQEMNSKRKF…NKKQQLLRDR (141 aa)). Over residues 785–800 (QERARLPKNQKAEAKT) the composition is skewed to basic and acidic residues. The segment at 785–804 (QERARLPKNQKAEAKTRMTM) is disordered. The stretch at 898-928 (RENLRPRKKALEDELEHKKEEQEMFFRMNEE) forms a coiled coil. Residues 930–951 (AGHPFPSNKPAKFYSFSSPEAS) are disordered.

This sequence belongs to the protein kinase superfamily. STE Ser/Thr protein kinase family. STE20 subfamily. Homodimer. In terms of processing, autophosphorylates. Phosphorylated by plk1/plx1, suggesting the existence of a feedback loop with plk1/plx1. activation of the protein.

It localises to the cell membrane. The catalysed reaction is L-seryl-[protein] + ATP = O-phospho-L-seryl-[protein] + ADP + H(+). The enzyme catalyses L-threonyl-[protein] + ATP = O-phospho-L-threonyl-[protein] + ADP + H(+). Functionally, may act as a polo kinase kinase by mediating phosphorylation of plk1/plx1 and subsequent activation of plk1/plx1 during oocyte maturation. This chain is Serine/threonine-protein kinase 10 (stk10), found in Xenopus tropicalis (Western clawed frog).